Consider the following 321-residue polypeptide: Cytochrome c biogenesis protein CcsA (321 aa).

A run of 7 helical transmembrane segments spans residues Ile17–Leu37, Leu41–Val61, Leu68–Phe88, Met143–Ile163, Ile227–Asn247, Glu260–Arg277, and Ala288–Leu308.

Belongs to the CcmF/CycK/Ccl1/NrfE/CcsA family. As to quaternary structure, may interact with Ccs1.

It is found in the plastid. The protein localises to the chloroplast thylakoid membrane. In terms of biological role, required during biogenesis of c-type cytochromes (cytochrome c6 and cytochrome f) at the step of heme attachment. The protein is Cytochrome c biogenesis protein CcsA of Piper cenocladum (Ant piper).